We begin with the raw amino-acid sequence, 555 residues long: Urocanate hydratase (555 aa).

NAD(+)-binding positions include 52–53 (GG), Gln-130, 176–178 (GMG), Glu-196, Arg-201, 242–243 (NA), 263–267 (QTSAH), 272–273 (YL), and Tyr-321. Cys-409 is a catalytic residue. NAD(+) is bound at residue Gly-491.

This sequence belongs to the urocanase family. NAD(+) is required as a cofactor.

It is found in the cytoplasm. It catalyses the reaction 4-imidazolone-5-propanoate = trans-urocanate + H2O. Its pathway is amino-acid degradation; L-histidine degradation into L-glutamate; N-formimidoyl-L-glutamate from L-histidine: step 2/3. Catalyzes the conversion of urocanate to 4-imidazolone-5-propionate. This Nocardioides sp. (strain ATCC BAA-499 / JS614) protein is Urocanate hydratase.